Here is a 359-residue protein sequence, read N- to C-terminus: Phospho-N-acetylmuramoyl-pentapeptide-transferase (359 aa).

The next 10 helical transmembrane spans lie at 3 to 23 (QILF…PVLI), 53 to 73 (GGVA…LIGI), 84 to 104 (GLLV…DDFI), 117 to 137 (TAKL…ALQF), 156 to 176 (IATV…LVSA), 187 to 207 (LDGL…IITF), 231 to 251 (LALI…WNAA), 255 to 275 (IFMG…LSIT), 283 to 303 (VVIG…VAVF), and 330 to 350 (VIIR…ALFY).

The protein belongs to the glycosyltransferase 4 family. MraY subfamily. It depends on Mg(2+) as a cofactor.

Its subcellular location is the cell membrane. The catalysed reaction is UDP-N-acetyl-alpha-D-muramoyl-L-alanyl-gamma-D-glutamyl-meso-2,6-diaminopimeloyl-D-alanyl-D-alanine + di-trans,octa-cis-undecaprenyl phosphate = di-trans,octa-cis-undecaprenyl diphospho-N-acetyl-alpha-D-muramoyl-L-alanyl-D-glutamyl-meso-2,6-diaminopimeloyl-D-alanyl-D-alanine + UMP. The protein operates within cell wall biogenesis; peptidoglycan biosynthesis. Its function is as follows. Catalyzes the initial step of the lipid cycle reactions in the biosynthesis of the cell wall peptidoglycan: transfers peptidoglycan precursor phospho-MurNAc-pentapeptide from UDP-MurNAc-pentapeptide onto the lipid carrier undecaprenyl phosphate, yielding undecaprenyl-pyrophosphoryl-MurNAc-pentapeptide, known as lipid I. The polypeptide is Phospho-N-acetylmuramoyl-pentapeptide-transferase (Rhodococcus opacus (strain B4)).